The primary structure comprises 216 residues: MANKEEIIAKAKDAITDFDDELAAEVAAEALAAGVDPVELIEKGFTAGMQEVGEQFEQGTLFLPHVLAAAEAMNAGIEVIKPEMEKRKSQTKSLGTIVIGTIEGDIHSIGKDIVASMLNIAGFKVVDLGRDVPIKTFVEKAKEIKPQIIASSALMTTTMVNQIQIEEQLKEAGIRGQVKTMVGGAPVTQDWADKIGADIYGESATDVVSKVKAALL.

One can recognise a B12-binding N-terminal domain in the interval 1–92; sequence MANKEEIIAK…EMEKRKSQTK (92 aa). The region spanning 94 to 216 is the B12-binding domain; that stretch reads LGTIVIGTIE…VVSKVKAALL (123 aa). Methylcob(III)alamin is bound at residue H107.

It belongs to the methylamine corrinoid protein family. In terms of assembly, can form a complex with MttB.

It functions in the pathway one-carbon metabolism; methanogenesis from trimethylamine. In terms of biological role, acts probably as a methyl group carrier between MttB and either MtbA or MtaA. The protein is Trimethylamine corrinoid protein 1 (mttC1) of Methanosarcina mazei (strain ATCC BAA-159 / DSM 3647 / Goe1 / Go1 / JCM 11833 / OCM 88) (Methanosarcina frisia).